A 201-amino-acid chain; its full sequence is Lipopolysaccharide core heptose(II)-phosphate phosphatase (201 aa).

Positions 1-33 (MLAFTLRFIKNKRYFAILAGALVIIAGLASQHA) are cleaved as a signal peptide.

It belongs to the phosphoglycerate mutase family. Ais subfamily.

Its subcellular location is the periplasm. It functions in the pathway bacterial outer membrane biogenesis; lipopolysaccharide metabolism. In terms of biological role, catalyzes the dephosphorylation of heptose(II) of the outer membrane lipopolysaccharide core. This Salmonella typhi protein is Lipopolysaccharide core heptose(II)-phosphate phosphatase.